The following is a 421-amino-acid chain: Non-homologous end-joining factor LIF1 (421 aa).

The segment at 1–196 (MSQLTEFISC…VEQLAREREL (196 aa)) is interaction with NEJ1. The interval 365–421 (GIQISAGRSDEDYGDISGSESETDASAGEKKSSNHSEQSGNDREPCLQTESETDIET) is disordered. The span at 391–409 (AGEKKSSNHSEQSGNDREP) shows a compositional bias: basic and acidic residues.

It belongs to the XRCC4-XLF family. XLF subfamily. In terms of assembly, interacts with DNL4 (via BRCT domain). Interacts (via N-terminus) with NEJ1 (via C-terminus); the interaction is direct. The DNL4-LIF1 complex interacts with POL4.

The protein resides in the cytoplasm. It localises to the nucleus. Functionally, involved in non-homologous repair of DNA double-strand breaks. Stabilizes DNL4. This chain is Non-homologous end-joining factor LIF1 (LIF1), found in Saccharomyces cerevisiae (strain ATCC 204508 / S288c) (Baker's yeast).